The sequence spans 671 residues: Putative glycoside hydrolase BT_3595 (671 aa).

Residues 1-24 form the signal peptide; sequence MITGIISILCYLQCFGTLSASVTA.

It belongs to the glycoside hydrolase-like 3 (GHL3) family.

In Bacteroides thetaiotaomicron (strain ATCC 29148 / DSM 2079 / JCM 5827 / CCUG 10774 / NCTC 10582 / VPI-5482 / E50), this protein is Putative glycoside hydrolase BT_3595.